The chain runs to 181 residues: D-lyxose/D-mannose isomerase (181 aa).

Positions 75, 77, 88, and 143 each coordinate Mn(2+).

The protein belongs to the D-lyxose ketol-isomerase family. In terms of assembly, homodimer. Mn(2+) is required as a cofactor.

The catalysed reaction is D-lyxose = D-xylulose. The enzyme catalyses D-mannose = D-fructose. In terms of biological role, sugar isomerase that catalyzes the reversible isomerization of D-lyxose to D-xylulose, and D-mannose to D-fructose. Shows optimum activity using D-lyxose as substrate, but can also effectively catalyze the isomerization between D-fructose and D-mannose. The sequence is that of D-lyxose/D-mannose isomerase from Thermosediminibacter oceani (strain ATCC BAA-1034 / DSM 16646 / JW/IW-1228P).